We begin with the raw amino-acid sequence, 260 residues long: Coiled-coil domain-containing protein 127 (260 aa).

Residues 47-135 (ESQKEIEKAR…QIIQEKSQRQ (89 aa)) are a coiled coil.

In Rattus norvegicus (Rat), this protein is Coiled-coil domain-containing protein 127 (Ccdc127).